The sequence spans 249 residues: ATP synthase subunit a, chloroplastic (249 aa).

Helical transmembrane passes span 38-58 (GQVLITSWVVMAIIIITSVIA), 97-117 (VPFVGTLFLFIFISNWSGALI), 136-156 (INTTVALALLTSVAYFYAGLS), 201-221 (LVVAVLISLVPLVIPVPMMLL), and 222-242 (GLFTSGIQALIFATLAAAYIG).

Belongs to the ATPase A chain family. F-type ATPases have 2 components, CF(1) - the catalytic core - and CF(0) - the membrane proton channel. CF(1) has five subunits: alpha(3), beta(3), gamma(1), delta(1), epsilon(1). CF(0) has four main subunits: a, b, b' and c.

The protein resides in the plastid. Its subcellular location is the chloroplast thylakoid membrane. Functionally, key component of the proton channel; it plays a direct role in the translocation of protons across the membrane. This is ATP synthase subunit a, chloroplastic from Chlorokybus atmophyticus (Soil alga).